The sequence spans 549 residues: MSADITETPAWQALSDHHAEIGDRHLTELFADDPARGTELALTVGDLYIDYSKHRVTRRTLDLLVDLARAAGLEERRDAMFAGEHINTSEDRAVLHTALRLPRDAKLVVDGQDVVADVHDVLDRMGDFTDRLRSGEWTGATGERITTVVNIGIGGSDLGPVMVYDALRHYADAGISARFVSNVDPADLVAKLDGLEPAKTLFIVASKTFSTLETLTNATAARRWLTDALGDAAVAKHFVAVSTNKKLVDEFGINTDNMFGFWDWVGGRYSVDSAIGLSVMAVIGKERFAEFLAGFHIVDEHFRTAPLHQNAPALLGLIGLWYSNFFGAQSRAVLPYSNDLSRFAAYLQQLTMESNGKSVRADGTPVSTDTGEIFWGEPGTNGQHAFYQLLHQGTRLVPADFIGFSQPTDDLPTADGTGSMHDLLMSNFFAQTQVLAFGKTADAIASEGTPADVVPHKVMPGNRPTTSILATKLTPSVVGQLIALYEHQVFTEGVIWGIDSFDQWGVELGKTQAKALLPVLTGDKSPAAQSDTSTDALVRRYRTERGRPA.

E353 functions as the Proton donor in the catalytic mechanism. Residues H384 and K510 contribute to the active site.

This sequence belongs to the GPI family.

It is found in the cytoplasm. The enzyme catalyses alpha-D-glucose 6-phosphate = beta-D-fructose 6-phosphate. It participates in carbohydrate biosynthesis; gluconeogenesis. It functions in the pathway carbohydrate degradation; glycolysis; D-glyceraldehyde 3-phosphate and glycerone phosphate from D-glucose: step 2/4. Its function is as follows. Catalyzes the reversible isomerization of glucose-6-phosphate to fructose-6-phosphate. This is Glucose-6-phosphate isomerase from Mycolicibacterium smegmatis (strain ATCC 700084 / mc(2)155) (Mycobacterium smegmatis).